Consider the following 278-residue polypeptide: NAD-capped RNA hydrolase NudC (278 aa).

Substrate is bound at residue Arg84. Zn(2+)-binding residues include Cys114 and Cys117. Residue Glu127 coordinates substrate. Positions 132 and 135 each coordinate Zn(2+). A substrate-binding site is contributed by Tyr140. The Nudix hydrolase domain occupies 141–265; it reads PRLSPSMIVL…IARHLIDLYL (125 aa). A divalent metal cation is bound by residues Ala174, Glu190, and Glu194. The Nudix box signature appears at 175–196; that stretch reads GFVEAGESVEQCVVREVREEVG. 208-215 serves as a coordination point for substrate; sequence QNWPFPHS. Glu235 serves as a coordination point for a divalent metal cation. Ala257 contributes to the substrate binding site.

This sequence belongs to the Nudix hydrolase family. NudC subfamily. Homodimer. Requires Mg(2+) as cofactor. Mn(2+) is required as a cofactor. Zn(2+) serves as cofactor.

It catalyses the reaction a 5'-end NAD(+)-phospho-ribonucleoside in mRNA + H2O = a 5'-end phospho-adenosine-phospho-ribonucleoside in mRNA + beta-nicotinamide D-ribonucleotide + 2 H(+). The catalysed reaction is NAD(+) + H2O = beta-nicotinamide D-ribonucleotide + AMP + 2 H(+). The enzyme catalyses NADH + H2O = reduced beta-nicotinamide D-ribonucleotide + AMP + 2 H(+). In terms of biological role, mRNA decapping enzyme that specifically removes the nicotinamide adenine dinucleotide (NAD) cap from a subset of mRNAs by hydrolyzing the diphosphate linkage to produce nicotinamide mononucleotide (NMN) and 5' monophosphate mRNA. The NAD-cap is present at the 5'-end of some mRNAs and stabilizes RNA against 5'-processing. Has preference for mRNAs with a 5'-end purine. Catalyzes the hydrolysis of a broad range of dinucleotide pyrophosphates. The polypeptide is NAD-capped RNA hydrolase NudC (Pseudomonas aeruginosa (strain ATCC 15692 / DSM 22644 / CIP 104116 / JCM 14847 / LMG 12228 / 1C / PRS 101 / PAO1)).